We begin with the raw amino-acid sequence, 594 residues long: Transcriptional repressor p66-beta (594 aa).

At S17 the chain carries Phosphoserine. Glycyl lysine isopeptide (Lys-Gly) (interchain with G-Cter in SUMO2) cross-links involve residues K33 and K66. The tract at residues 62–143 (ELPTKQDGSG…ASSPRSSSRM (82 aa)) is disordered. Basic and acidic residues predominate over residues 74 to 89 (GYEEKLNGNLRPHGDN). K98 is covalently cross-linked (Glycyl lysine isopeptide (Lys-Gly) (interchain with G-Cter in SUMO2)). The span at 109 to 119 (SARRSEPDRGR) shows a compositional bias: basic and acidic residues. Position 121 is a phosphothreonine (T121). Phosphoserine is present on residues S123, S130, S135, and S136. Low complexity predominate over residues 130-140 (SDNEASSPRSS). Positions 141 to 195 (SRMEERLKAANLEMFKGKGMEERQQLIKQLRDELRLEEARLVLLKKLRQSQLQKE) form a coiled coil. A Glycyl lysine isopeptide (Lys-Gly) (interchain with G-Cter in SUMO2) cross-link involves residue K148. The CR1; interaction with MBD2 and MBD3 stretch occupies residues 166 to 191 (LIKQLRDELRLEEARLVLLKKLRQSQ). Residue K200 forms a Glycyl lysine isopeptide (Lys-Gly) (interchain with G-Cter in SUMO2) linkage. Phosphoserine is present on S209. The tract at residues 214–237 (SPAHVGQQGLSKLPSRPGAQGIEP) is disordered. K282 is covalently cross-linked (Glycyl lysine isopeptide (Lys-Gly) (interchain with G-Cter in SUMO2)). Residues S334, S339, and S341 each carry the phosphoserine modification. A CR2; histone tail-binding region spans residues 341-481 (SAMSDAANSQ…QEQEIEQRLQ (141 aa)). Residues K354, K455, and K468 each participate in a glycyl lysine isopeptide (Lys-Gly) (interchain with G-Cter in SUMO2) cross-link. Residues 415–468 (RVEPFVCAQCRTDFTPHWKQEKNGKILCEQCMTSNQKKALKAEHTNRLKNAFVK) form a GATA-type zinc finger. A coiled-coil region spans residues 450 to 483 (QKKALKAEHTNRLKNAFVKALQQEQEIEQRLQQQ). S487 is subject to Phosphoserine. A Glycyl lysine isopeptide (Lys-Gly) (interchain with G-Cter in SUMO2) cross-link involves residue K499.

In terms of assembly, homooligomer. Component of the nucleosome remodeling and deacetylase (NuRD) repressor complex, composed of core proteins MTA1, MTA2, MTA3, RBBP4, RBBP7, HDAC1, HDAC2, MBD2, MBD3, and peripherally associated proteins CDK2AP1, CDK2AP2, GATAD2A, GATAD2B, CHD3, CHD4 and CHD5. The exact stoichiometry of the NuRD complex is unknown, and some subunits such as MBD2 and MBD3, GATAD2A and GATAD2B, and CHD3, CHD4 and CHD5 define mutually exclusive NuRD complexes. Interacts with MBD2; this is required for the enhancement of MBD2-mediated repression and for targeting to the chromatin. Interacts with MBD3. Component of the MeCP1 histone deacetylase complex. Interacts with histone tails, including that of histones H2A, H2B, H3 and H4. Interacts with ERCC6.

Its subcellular location is the nucleus speckle. The protein localises to the nucleus. The protein resides in the chromosome. In terms of biological role, transcriptional repressor. Acts as a component of the histone deacetylase NuRD complex which participates in the remodeling of chromatin. Enhances MBD2-mediated repression. Efficient repression requires the presence of GATAD2A. Targets MBD3 to discrete loci in the nucleus. May play a role in synapse development. The protein is Transcriptional repressor p66-beta (Gatad2b) of Mus musculus (Mouse).